Reading from the N-terminus, the 632-residue chain is Arginine--tRNA ligase (632 aa).

The 'HIGH' region signature appears at 129–139; the sequence is ANPVHPLHVGS.

The protein belongs to the class-I aminoacyl-tRNA synthetase family.

Its subcellular location is the cytoplasm. The enzyme catalyses tRNA(Arg) + L-arginine + ATP = L-arginyl-tRNA(Arg) + AMP + diphosphate. The protein is Arginine--tRNA ligase of Korarchaeum cryptofilum (strain OPF8).